We begin with the raw amino-acid sequence, 369 residues long: Endo-1,4-beta-xylanase A (369 aa).

A signal peptide spans 1–20 (MRKLTQFCLGLMLLPIAAVA). Positions 21–367 (QNQPTMKDVL…KPVVKEIIKL (347 aa)) constitute a GH10 domain. The active-site Proton donor is Glu-156. Glu-261 serves as the catalytic Nucleophile.

This sequence belongs to the glycosyl hydrolase 10 (cellulase F) family.

The catalysed reaction is Endohydrolysis of (1-&gt;4)-beta-D-xylosidic linkages in xylans.. The protein operates within glycan degradation; xylan degradation. This is Endo-1,4-beta-xylanase A (xynA) from Xylanibacter ruminicola (Prevotella ruminicola).